The sequence spans 504 residues: Multidrug efflux pump LfrA (504 aa).

Helical transmembrane passes span 19-39, 58-78, 87-107, 110-130, 145-165, 172-192, 206-226, 233-253, 275-295, 309-329, 338-358, 361-381, 408-428, and 480-500; these read WVALAVLALPVLLIAIDNTVL, LWIVDVYSLVLAALLVAMGSL, LLLIGGAGFAVVSALAAFAPS, LLVGARALLGVFGAMLMPSTL, LAIAIWASCFTAGSALGPIVG, FHWGAVFLVAVPILLPLLVLG, PFDPVSIVLSFTTMLPIVWAV, GLSAAAAAAFAVGIVSGALFV, TSSILANFLSIIGLIGFIFFI, TAGLVTLPGAVVSMIAGLAVV, DTLMVTGLVFVAVGFLMILLF, NLTVAAIIASFVVLELGVGVS, AYELGAVVGTATLGTIFTAFY, and IAPTAVIAAMLVLAAAAVVGV.

This sequence belongs to the major facilitator superfamily.

Its subcellular location is the cell inner membrane. Inhibited by the protonophore carbonyl cyanide m-chorophenylhydrazone (CCCP). Ethidium bromide efflux is inhibited by chlorpromazine, thioridazine and verapamil. Its function is as follows. Energy-dependent efflux pump that contributes to drug resistance. Catalyzes the efflux of norfloxacin and several related fluoroquinolones (FQ). Contributes significantly to the intrinsic MICs for ethidium bromide and acriflavine. Overexpression confers low-level resistance to hydrophilic FQ such as ciprofloxacin, ofloxacin and levofloxacin, and to ethidium bromide, acridine, acriflavine, rhodamine 123 and some quaternary ammonium compounds. May contribute to resistance to certain beta-lactams. Probably uses the proton motive force to export drugs. The chain is Multidrug efflux pump LfrA from Mycolicibacterium smegmatis (strain ATCC 700084 / mc(2)155) (Mycobacterium smegmatis).